Consider the following 361-residue polypeptide: tRNA 2-selenouridine synthase (361 aa).

Residues 12–135 (VLKNIPLIDV…FRRYLIDHLE (124 aa)) enclose the Rhodanese domain. Cys95 (S-selanylcysteine intermediate) is an active-site residue.

It belongs to the SelU family. Monomer.

It carries out the reaction 5-methylaminomethyl-2-thiouridine(34) in tRNA + selenophosphate + (2E)-geranyl diphosphate + H2O + H(+) = 5-methylaminomethyl-2-selenouridine(34) in tRNA + (2E)-thiogeraniol + phosphate + diphosphate. The catalysed reaction is 5-methylaminomethyl-2-thiouridine(34) in tRNA + (2E)-geranyl diphosphate = 5-methylaminomethyl-S-(2E)-geranyl-thiouridine(34) in tRNA + diphosphate. The enzyme catalyses 5-methylaminomethyl-S-(2E)-geranyl-thiouridine(34) in tRNA + selenophosphate + H(+) = 5-methylaminomethyl-2-(Se-phospho)selenouridine(34) in tRNA + (2E)-thiogeraniol. It catalyses the reaction 5-methylaminomethyl-2-(Se-phospho)selenouridine(34) in tRNA + H2O = 5-methylaminomethyl-2-selenouridine(34) in tRNA + phosphate. Functionally, involved in the post-transcriptional modification of the uridine at the wobble position (U34) of tRNA(Lys), tRNA(Glu) and tRNA(Gln). Catalyzes the conversion of 2-thiouridine (S2U-RNA) to 2-selenouridine (Se2U-RNA). Acts in a two-step process involving geranylation of 2-thiouridine (S2U) to S-geranyl-2-thiouridine (geS2U) and subsequent selenation of the latter derivative to 2-selenouridine (Se2U) in the tRNA chain. The sequence is that of tRNA 2-selenouridine synthase from Hydrogenovibrio crunogenus (strain DSM 25203 / XCL-2) (Thiomicrospira crunogena).